A 148-amino-acid chain; its full sequence is Large ribosomal subunit protein bL9 (148 aa).

The protein belongs to the bacterial ribosomal protein bL9 family.

In terms of biological role, binds to the 23S rRNA. This Leptospira biflexa serovar Patoc (strain Patoc 1 / Ames) protein is Large ribosomal subunit protein bL9.